A 280-amino-acid chain; its full sequence is Diaminopimelate epimerase (280 aa).

Substrate-binding residues include Asn-15 and Asn-66. Cys-75 serves as the catalytic Proton donor. Substrate is bound by residues Gly-76–Asn-77, Asn-163, Asn-196, and Glu-214–Arg-215. Cys-223 acts as the Proton acceptor in catalysis. Gly-224–Thr-225 is a binding site for substrate.

Belongs to the diaminopimelate epimerase family. As to quaternary structure, homodimer.

The protein localises to the cytoplasm. It catalyses the reaction (2S,6S)-2,6-diaminopimelate = meso-2,6-diaminopimelate. The protein operates within amino-acid biosynthesis; L-lysine biosynthesis via DAP pathway; DL-2,6-diaminopimelate from LL-2,6-diaminopimelate: step 1/1. Its function is as follows. Catalyzes the stereoinversion of LL-2,6-diaminopimelate (L,L-DAP) to meso-diaminopimelate (meso-DAP), a precursor of L-lysine and an essential component of the bacterial peptidoglycan. This Phocaeicola vulgatus (strain ATCC 8482 / DSM 1447 / JCM 5826 / CCUG 4940 / NBRC 14291 / NCTC 11154) (Bacteroides vulgatus) protein is Diaminopimelate epimerase.